Reading from the N-terminus, the 243-residue chain is UPF0246 protein SAK_2020 (243 aa).

Belongs to the UPF0246 family.

The sequence is that of UPF0246 protein SAK_2020 from Streptococcus agalactiae serotype Ia (strain ATCC 27591 / A909 / CDC SS700).